Reading from the N-terminus, the 449-residue chain is Uridine-cytidine kinase C (449 aa).

58-65 contacts ATP; sequence GPSGAGKT. Positions 235–401 constitute a CYTH domain; it reads NPIYILKSVK…QKSYIELYQD (167 aa).

This sequence belongs to the uridine kinase family.

It catalyses the reaction uridine + ATP = UMP + ADP + H(+). The catalysed reaction is cytidine + ATP = CMP + ADP + H(+). The protein operates within pyrimidine metabolism; CTP biosynthesis via salvage pathway; CTP from cytidine: step 1/3. It functions in the pathway pyrimidine metabolism; UMP biosynthesis via salvage pathway; UMP from uridine: step 1/1. Functionally, catalyzes the conversion of uridine into uridine monophosphate and cytidine into cytidine monophosphate in the pyrimidine salvage pathway. The polypeptide is Uridine-cytidine kinase C (udkC) (Dictyostelium discoideum (Social amoeba)).